The following is an 894-amino-acid chain: Desmocollin-1 (894 aa).

An N-terminal signal peptide occupies residues 1–29; the sequence is MALASAAPGSIFCKQLLFSLLVLTLLCDA. The propeptide occupies 30–134; sequence CQKVYLRVPS…KDTALKRSKR (105 aa). 5 Cadherin domains span residues 135-242, 243-354, 355-471, 472-575, and 576-682; these read RWAP…APYF, EHRV…PPSF, TETS…GPEC, HPPV…DHAP, and QIDK…STRD. Over 135–691 the chain is Extracellular; that stretch reads RWAPIPASLM…DVRPNVILGR (557 aa). Asn165 carries an N-linked (GlcNAc...) asparagine glycan. Thr385 is modified (phosphothreonine). Asn546 is a glycosylation site (N-linked (GlcNAc...) asparagine). The chain crosses the membrane as a helical span at residues 692–714; the sequence is WAILAMVLGSVLLLCILFTCFCV. The Cytoplasmic segment spans residues 715-894; it reads TAKRTVKKCF…RTLAKTCIKK (180 aa).

In terms of assembly, binds to JUP/plakoglobin. In terms of tissue distribution, strongly expressed in epidermis, less in lymph node and tongue.

It localises to the cell membrane. It is found in the cell junction. The protein resides in the desmosome. In terms of biological role, a component of desmosome cell-cell junctions which are required for positive regulation of cellular adhesion. Required for desmosome adhesion strength between the granular layers of the epidermis, as a result moderates epidermal proliferation and differentiation. Is therefore required to maintain postnatal epidermal barrier function and normal hair follicle morphology into adulthood. In Homo sapiens (Human), this protein is Desmocollin-1 (DSC1).